We begin with the raw amino-acid sequence, 65 residues long: Beta-mammal toxin Tma1 (65 aa).

Residues 2–64 (KEGYLVGNDG…TWNSAKNRCG (63 aa)) form the LCN-type CS-alpha/beta domain. Disulfide bonds link Cys-12/Cys-63, Cys-16/Cys-38, Cys-24/Cys-44, and Cys-28/Cys-46.

Belongs to the long (4 C-C) scorpion toxin superfamily. Sodium channel inhibitor family. Expressed by the venom gland.

It localises to the secreted. In terms of biological role, beta toxins bind voltage-independently at site-4 of sodium channels (Nav) and shift the voltage of activation toward more negative potentials thereby affecting sodium channel activation and promoting spontaneous and repetitive firing. This toxin acts on human Nav1.4/SCN4A and Nav1.6/SCN8A voltage-gated sodium channels. This Tityus macrochirus (Scorpion) protein is Beta-mammal toxin Tma1.